The primary structure comprises 298 residues: MVRMVPVLLSLLLLLGPAVPQENQDGRYSLTYIYTGLSKHVEDVPAFQALGSLNDLQFFRYNSKDRKSQPMGLWRQVEGMEDWKQDSQLQKAREDIFMETLKDIVEYYNDSNGSHVLQGRFGCEIENNRSSGAFWKYYYDGKDYIEFNKEIPAWVPFDPAAQITKQKWEAEPVYVQRAKAYLEEECPATLRKYLKYSKNILDRQDPPSVVVTSHQAPGEKKKLKCLAYDFYPGKIDVHWTRAGEVQEPELRGDVLHNGNGTYQSWVVVAVPPQDTAPYSCHVQHSSLAQPLVVPWEAS.

Positions 1-20 (MVRMVPVLLSLLLLLGPAVP) are cleaved as a signal peptide. Gln-21 carries the post-translational modification Pyrrolidone carboxylic acid. N-linked (GlcNAc...) (complex) asparagine glycosylation is present at Asn-109. Asn-112 carries N-linked (GlcNAc...) asparagine glycosylation. 2 disulfide bridges follow: Cys-123-Cys-186 and Cys-225-Cys-280. An N-linked (GlcNAc...) (complex) asparagine glycan is attached at Asn-128. One can recognise an Ig-like C1-type domain in the interval 207–292 (PSVVVTSHQA…QHSSLAQPLV (86 aa)). The N-linked (GlcNAc...) asparagine glycan is linked to Asn-259.

Belongs to the MHC class I family. In terms of assembly, interacts with PIP. Post-translationally, N-glycosylated. N-glycan at Asn-128: Hex5HexNAc4. In terms of tissue distribution, blood plasma, seminal plasma, urine, saliva, sweat, epithelial cells of various human glands, liver.

Its subcellular location is the secreted. In terms of biological role, stimulates lipid degradation in adipocytes and causes the extensive fat losses associated with some advanced cancers. May bind polyunsaturated fatty acids. This Homo sapiens (Human) protein is Zinc-alpha-2-glycoprotein (AZGP1).